The primary structure comprises 395 residues: Elongation factor Tu (395 aa).

Positions 10–204 (KPHVNVGTIG…AVDAYIDTPL (195 aa)) constitute a tr-type G domain. Positions 19–26 (GHVDHGKT) are G1. Position 19–26 (19–26 (GHVDHGKT)) interacts with GTP. A Mg(2+)-binding site is contributed by Thr26. Residues 60 to 64 (GITIN) are G2. The interval 81–84 (DCPG) is G3. GTP-binding positions include 81 to 85 (DCPGH) and 136 to 139 (NKAD). Positions 136–139 (NKAD) are G4. A G5 region spans residues 174 to 176 (SAL).

It belongs to the TRAFAC class translation factor GTPase superfamily. Classic translation factor GTPase family. EF-Tu/EF-1A subfamily. As to quaternary structure, monomer.

The protein resides in the cytoplasm. It catalyses the reaction GTP + H2O = GDP + phosphate + H(+). In terms of biological role, GTP hydrolase that promotes the GTP-dependent binding of aminoacyl-tRNA to the A-site of ribosomes during protein biosynthesis. This is Elongation factor Tu from Acholeplasma laidlawii (strain PG-8A).